Here is a 111-residue protein sequence, read N- to C-terminus: Thioredoxin 2 (111 aa).

Residues 2–109 enclose the Thioredoxin domain; it reads SKGVITITDA…LLSFLDTHLN (108 aa). Cysteines 33 and 36 form a disulfide.

It belongs to the thioredoxin family.

Its function is as follows. Participates in various redox reactions through the reversible oxidation of its active center dithiol to a disulfide and catalyzes dithiol-disulfide exchange reactions. The polypeptide is Thioredoxin 2 (trxB) (Nostoc sp. (strain PCC 7120 / SAG 25.82 / UTEX 2576)).